Reading from the N-terminus, the 411-residue chain is Class E basic helix-loop-helix protein 40 (411 aa).

Residues Met1 to Leu20 are disordered. Positions Met1 to Gln139 are essential for interaction with BMAL1, E-box binding and repressor activity against the CLOCK-BMAL1 heterodimer. Residues Thr52–Leu107 form the bHLH domain. The tract at residues Leu75–Leu79 is necessary for interaction with RXRA and repressor activity against RXRA. The region spanning Phe142–Leu175 is the Orange domain. A Glycyl lysine isopeptide (Lys-Gly) (interchain with G-Cter in SUMO1, SUMO2 and SUMO3) cross-link involves residue Lys159. A Glycyl lysine isopeptide (Lys-Gly) (interchain with G-Cter in SUMO2) cross-link involves residue Lys167. Residues Phe227–Leu294 are disordered. A Phosphoserine modification is found at Ser235. Residues Glu248–Val271 show a composition bias toward basic and acidic residues. A Glycyl lysine isopeptide (Lys-Gly) (interchain with G-Cter in SUMO1); alternate cross-link involves residue Lys279. Lys279 is covalently cross-linked (Glycyl lysine isopeptide (Lys-Gly) (interchain with G-Cter in SUMO1, SUMO2 and SUMO3); alternate). Lys279 participates in a covalent cross-link: Glycyl lysine isopeptide (Lys-Gly) (interchain with G-Cter in SUMO2); alternate. Lys288 is covalently cross-linked (Glycyl lysine isopeptide (Lys-Gly) (interchain with G-Cter in SUMO2)). Ser383 is modified (phosphoserine).

In terms of assembly, homodimer. Heterodimer with BHLHE41/DEC2. Interacts with ubiquitin-conjugating enzyme UBE2I/UBC9. Interacts with HDAC1, SUMO1, RXRA and BMAL1. Interacts with TCF3/E47. Ubiquitinated; which may lead to proteasomal degradation. In terms of processing, sumoylation inhibits its ubiquitination and promotes its negative regulation of the CLOCK-BMAL1 heterodimer transcriptional activator activity.

Its subcellular location is the cytoplasm. It localises to the nucleus. Functionally, transcriptional repressor involved in the regulation of the circadian rhythm by negatively regulating the activity of the clock genes and clock-controlled genes. Acts as the negative limb of a novel autoregulatory feedback loop (DEC loop) which differs from the one formed by the PER and CRY transcriptional repressors (PER/CRY loop). Both these loops are interlocked as it represses the expression of PER1/2 and in turn is repressed by PER1/2 and CRY1/2. Represses the activity of the circadian transcriptional activator: CLOCK-BMAL1|BMAL2 heterodimer by competing for the binding to E-box elements (5'-CACGTG-3') found within the promoters of its target genes. Negatively regulates its own expression and the expression of DBP and BHLHE41/DEC2. Acts as a corepressor of RXR and the RXR-LXR heterodimers and represses the ligand-induced RXRA and NR1H3/LXRA transactivation activity. May function as a transcriptional factor for neuronal differentiation. Represses the transcription of NR0B2 and attentuates the transactivation of NR0B2 by the CLOCK-BMAL1 complex. Drives the circadian rhythm of blood pressure through transcriptional repression of ATP1B1 in the cardiovascular system. This is Class E basic helix-loop-helix protein 40 (Bhlhe40) from Mus musculus (Mouse).